Reading from the N-terminus, the 634-residue chain is Kelch-like protein 22 (634 aa).

A2 carries the post-translational modification N-acetylalanine. In terms of domain architecture, BTB spans 50–117 (FDVVLVVEGR…IYTSELELSL (68 aa)). Kelch repeat units lie at residues 299–349 (CVVG…VLNN), 350–399 (FVYL…VVGR), 400–446 (YIYA…TLEG), 448–493 (MYIT…TLLN), 494–544 (KLYV…VLDN), and 545–593 (RIYV…VLTL). At T463 the chain carries Phosphothreonine. Phosphotyrosine is present on Y466. Phosphothreonine is present on T475. Residues 600–634 (EPPRGTPDRSQADPDFASEVMSVSDWEEFDNSSED) are disordered. Residue T605 is modified to Phosphothreonine. Residues 624-634 (DWEEFDNSSED) show a composition bias toward acidic residues.

Component of the BCR(KLHL22) E3 ubiquitin ligase complex, at least composed of CUL3, KLHL22 and RBX1. Interacts with PLK1. Interacts with DEPDC5 (via DEP domain); the interaction depends on amino acid availability. Interacts with YWHAE; required for the nuclear localization of KLHL22 upon amino acid starvation.

It localises to the cytoplasm. It is found in the cytosol. Its subcellular location is the cytoskeleton. The protein resides in the microtubule organizing center. The protein localises to the centrosome. It localises to the spindle. It is found in the nucleus. Its subcellular location is the lysosome. The protein operates within protein modification; protein ubiquitination. Functionally, substrate-specific adapter of a BCR (BTB-CUL3-RBX1) E3 ubiquitin ligase complex required for chromosome alignment and localization of PLK1 at kinetochores. The BCR(KLHL22) ubiquitin ligase complex mediates monoubiquitination of PLK1, leading to PLK1 dissociation from phosphoreceptor proteins and subsequent removal from kinetochores, allowing silencing of the spindle assembly checkpoint (SAC) and chromosome segregation. Monoubiquitination of PLK1 does not lead to PLK1 degradation. The BCR(KLHL22) ubiquitin ligase complex is also responsible for the amino acid-stimulated 'Lys-48' polyubiquitination and proteasomal degradation of DEPDC5. Through the degradation of DEPDC5, releases the GATOR1 complex-mediated inhibition of the TORC1 pathway. It is therefore an amino acid-dependent activator within the amino acid-sensing branch of the TORC1 pathway, indirectly regulating different cellular processes including cell growth and autophagy. This Homo sapiens (Human) protein is Kelch-like protein 22.